Consider the following 109-residue polypeptide: Large ribosomal subunit protein uL22 (109 aa).

This sequence belongs to the universal ribosomal protein uL22 family. Part of the 50S ribosomal subunit.

This protein binds specifically to 23S rRNA; its binding is stimulated by other ribosomal proteins, e.g. L4, L17, and L20. It is important during the early stages of 50S assembly. It makes multiple contacts with different domains of the 23S rRNA in the assembled 50S subunit and ribosome. Its function is as follows. The globular domain of the protein is located near the polypeptide exit tunnel on the outside of the subunit, while an extended beta-hairpin is found that lines the wall of the exit tunnel in the center of the 70S ribosome. The sequence is that of Large ribosomal subunit protein uL22 from Blochmanniella pennsylvanica (strain BPEN).